A 99-amino-acid chain; its full sequence is U8-agatoxin-Ao1a (99 aa).

Residues 1–19 (MKSLLFVTIAVYFVAQAVT) form the signal peptide. A propeptide spanning residues 20 to 45 (ANLLSNFLGSSLIDDDKGNMHKLYKR) is cleaved from the precursor.

This sequence belongs to the neurotoxin 02 (plectoxin) family. In terms of processing, contains 5 disulfide bonds. Expressed by the venom gland.

It is found in the secreted. This Agelena orientalis (Funnel-web spider) protein is U8-agatoxin-Ao1a.